A 393-amino-acid polypeptide reads, in one-letter code: Calreticulin (393 aa).

Residues 1 to 16 (MLSILLTLLLSKYALG) form the signal peptide. Residue Asn27 is glycosylated (N-linked (GlcNAc...) asparagine). Cys103 and Cys135 form a disulfide bridge. An alpha-D-glucoside is bound by residues Tyr107, Lys109, Tyr126, and Asp133. 7 consecutive repeat copies span residues 189–200 (VEEGSLEDDWDM), 208–219 (DPNDKKPDDWVD), 225–236 (DPDDKKPDNWDQ), 242–253 (DMDAKKPDDWDD), 257–267 (GEWERPQKDNP), 271–281 (GEWTPRRIDNP), and 285–295 (GEWKPVQIDNP). Residues 189–253 (VEEGSLEDDW…DAKKPDDWDD (65 aa)) form a 4 X 12 AA approximate repeats region. The tract at residues 194–277 (LEDDWDMLPP…EYKGEWTPRR (84 aa)) is disordered. The segment covering 202-216 (PPKKIDDPNDKKPDD) has biased composition (basic and acidic residues). The segment covering 217 to 226 (WVDEQFIDDP) has biased composition (acidic residues). Basic and acidic residues-rich tracts occupy residues 227 to 249 (DDKKPDNWDQPKTIPDMDAKKPD) and 258 to 277 (EWERPQKDNPEYKGEWTPRR). The segment at 257 to 295 (GEWERPQKDNPEYKGEWTPRRIDNPKYKGEWKPVQIDNP) is 3 X 11 AA approximate repeats. Asp315 serves as a coordination point for an alpha-D-glucoside. Residues 351–393 (AEVAKEQSSAKDDKEEAEETKERKELPYDAKASDEPSGDHDEL) form a disordered region. Positions 390–393 (HDEL) match the Prevents secretion from ER motif.

Belongs to the calreticulin family.

The protein resides in the endoplasmic reticulum lumen. Its function is as follows. Molecular calcium-binding chaperone promoting folding, oligomeric assembly and quality control in the ER via the calreticulin/calnexin cycle. This lectin may interact transiently with almost all of the monoglucosylated glycoproteins that are synthesized in the ER. In Schistosoma mansoni (Blood fluke), this protein is Calreticulin.